Here is a 245-residue protein sequence, read N- to C-terminus: Chloride intracellular channel protein 2 (245 aa).

The required for insertion into the membrane stretch occupies residues 1–96; sequence MASLALNTQA…EEFLEKTLAP (96 aa). Position 25 (Glu-25) interacts with glutathione. Positions 30 to 33 match the G-site motif; sequence CPFC. Cysteines 30 and 33 form a disulfide. The helical transmembrane segment at 32-52 threads the bilayer; that stretch reads FCQRLFMILWLKGVKFNVTTI. A GST C-terminal domain is found at 76-239; it reads NKELKTDFIK…PEDKEIENTY (164 aa). His-227 contacts glutathione.

Belongs to the chloride channel CLIC family. Monomer. Interacts with TRAPPC2 and RYR2.

It localises to the cytoplasm. Its subcellular location is the membrane. The catalysed reaction is chloride(in) = chloride(out). It carries out the reaction tert-butyl hydroperoxide + 2 glutathione = tert-butanol + glutathione disulfide + H2O. The enzyme catalyses cumene hydroperoxide + 2 glutathione = 2-phenylpropan-2-ol + glutathione disulfide + H2O. In the soluble state, catalyzes glutaredoxin-like thiol disulfide exchange reactions with reduced glutathione as electron donor. Displays weak glutathione peroxidase activity. Can insert into membranes and form chloride ion channels. Membrane insertion seems to be redox-regulated and may occur only under oxidizing conditions. Modulates the activity of RYR2 and inhibits calcium influx. The polypeptide is Chloride intracellular channel protein 2 (Rattus norvegicus (Rat)).